Reading from the N-terminus, the 241-residue chain is Small ribosomal subunit protein uS3 (241 aa).

Residues Ile39–Arg107 enclose the KH type-2 domain. Positions Ala214–Ala241 are disordered.

Belongs to the universal ribosomal protein uS3 family. As to quaternary structure, part of the 30S ribosomal subunit. Forms a tight complex with proteins S10 and S14.

Functionally, binds the lower part of the 30S subunit head. Binds mRNA in the 70S ribosome, positioning it for translation. This is Small ribosomal subunit protein uS3 from Mesorhizobium japonicum (strain LMG 29417 / CECT 9101 / MAFF 303099) (Mesorhizobium loti (strain MAFF 303099)).